The chain runs to 122 residues: Protein FLORAL ORGAN NUMBER2 (122 aa).

Positions 1–25 (MGRLFLCLVVAWCWVALLLVAPVHG) are cleaved as a signal peptide. A disordered region spans residues 28–122 (GLPGEFSGDQ…PEHARSTGRP (95 aa)). The segment covering 54–63 (KQPRGVKGTR) has biased composition (basic residues). Residues 64-77 (RPSWSSWSSTASRS) show a composition bias toward low complexity. Basic and acidic residues predominate over residues 111 to 122 (RRPEHARSTGRP).

It belongs to the CLV3/ESR signal peptide family.

It localises to the secreted. Probable extracellular signal that regulates meristem maintenance. May function as a putative ligand for a receptor complex including FON1. Regulates the size of the floral meristem and the number of floral organs. This is Protein FLORAL ORGAN NUMBER2 (FON2) from Oryza sativa subsp. indica (Rice).